The following is a 260-amino-acid chain: ELL-associated factor 2 (260 aa).

The segment at 17–104 (LKLGESFEKQ…TGECRLEKLS (88 aa)) is necessary for interaction with ELL. A compositionally biased stretch (basic and acidic residues) spans 116 to 126 (GSSKIQYRKEQ). Disordered regions lie at residues 116 to 154 (GSSK…SPAS) and 170 to 234 (MDQM…HNRF). S146, S151, and S154 each carry phosphoserine. Residues 174 to 192 (SSCDSSSDSKSSSSSSSED) show a composition bias toward low complexity. The tract at residues 177–260 (DSSSDSKSSS…LSESGSDSDD (84 aa)) is necessary for transactivation activity. Residues 225 to 234 (PDIDASHNRF) are compositionally biased toward basic and acidic residues. A necessary for interaction with TCEA1 and transactivation activity region spans residues 246-260 (RNDLQLSESGSDSDD).

Belongs to the EAF family. Isoform 1 and isoform 2 interact with TCEA1. Component of the super elongation complex (SEC), at least composed of EAF1, EAF2, CDK9, MLLT3/AF9, AFF (AFF1 or AFF4), the P-TEFb complex and ELL (ELL, ELL2 or ELL3). Interacts with ELL and ELL2. As to expression, expressed in heart, brain, placenta, lung, skeletal muscle, kidney, pancreas, spleen, prostate, testis, small intestine, colon, adrenal, bone marrow, lymph node, spinal gland, stomach, thyroid, trachea, thymus, liver and leukocytes.

The protein localises to the nucleus speckle. Its function is as follows. Acts as a transcriptional transactivator of TCEA1 elongation activity. Acts as a transcriptional transactivator of ELL and ELL2 elongation activities. Potent inducer of apoptosis in prostatic and non-prostatic cell lines. Inhibits prostate tumor growth in vivo. The sequence is that of ELL-associated factor 2 (EAF2) from Homo sapiens (Human).